We begin with the raw amino-acid sequence, 358 residues long: Branched-chain amino acid aminotransferase gloG (358 aa).

Arg-91 serves as a coordination point for pyridoxal 5'-phosphate. Lys-195 serves as the catalytic Proton acceptor. Lys-195 carries the post-translational modification N6-(pyridoxal phosphate)lysine. A pyridoxal 5'-phosphate-binding site is contributed by Glu-231.

This sequence belongs to the class-IV pyridoxal-phosphate-dependent aminotransferase family. Requires pyridoxal 5'-phosphate as cofactor.

It carries out the reaction L-isoleucine + 2-oxoglutarate = (S)-3-methyl-2-oxopentanoate + L-glutamate. It catalyses the reaction L-leucine + 2-oxoglutarate = 4-methyl-2-oxopentanoate + L-glutamate. The catalysed reaction is L-valine + 2-oxoglutarate = 3-methyl-2-oxobutanoate + L-glutamate. Its pathway is mycotoxin biosynthesis. Functionally, branched-chain amino acid aminotransferase; part of the gene cluster that mediates the biosynthesis of pneumocandins, lipohexapeptides of the echinocandin family that prevent fungal cell wall formation by non-competitive inhibition of beta-1,3-glucan synthase. The 10,12-dimethylmyristoyl side chain is synthesized by the reducing polyketide synthase gloL/GLPKS4. The thioesterase gloN/GLHYD exclusively interacts with gloL/GLPKS4 to maintain turnover of the polyketide side chain. The 10R,12S-dimethylmyristic acid is then transferred to the first thiolation domain of the nonribosomal peptide synthetase gloA/GLNRPS4 by the acyl-AMP ligase gloD/GLligase, followed by its acylation to L-ornithine to trigger elongation of the cyclic hexapeptide. L-ornithine, 4R-hydroxyl-L-proline (generated from L-proline by the dioxygenase gloF/GLOXY2), 3S-hydroxyl-L-homotyrosine (generated by gloG/GLHtyB, gloH/GLHtyA, gloI/GLHtyC, gloJ/GLHtyD and hydroxylated at C-3 by the dioxygenase gloM/GLOXY1), 3R-hydroxyl-L-glutamine (generated from L-glutamine probably by the dioxygenase gloE/GLOXY3) and 3S-hydroxyl-L-proline (generated from L-proline by the dioxygenase gloF/GLOXY2 to yield pneumocandin B0), or 3S-hydroxyl-4S-methyl-L-proline (generated from L-leucine by the dioxygenase gloC/GLOXY4 to yield pneumocandin A0) are sequentially added to the growing chain. The last C domain of gloA/GLNRPS4 is proposed to be responsible for cyclization by condensation to form the peptide bond between L-ornithine and 3S-hydroxyl-4S-methyl-L-proline (for pneumocandin A0) or 3S-hydroxyl-L-proline (for pneumocandin B0). Finally, the subsequent C-4 hydroxylation of 3S-hydroxyl-L-homotyrosine and L-ornithine dihydroxylation at C-4 and C-5 are performed by the cytochrome P450 monooxygenases gloP/GLP450-1 and gloO/GLP450-2, respectively. In Glarea lozoyensis (strain ATCC 20868 / MF5171), this protein is Branched-chain amino acid aminotransferase gloG.